The chain runs to 276 residues: MKSHVRSFKTYIRDEIIKKGGWVNAHAHADRAFTMTPEKIGIYHSSNLQQKWDLVDEVKRTSSVDDYYARFCQSIELMISQGVTAFGTFVDIDPICEDRAIIAAHKAREVYKHDIILKFANQTLKGVIEPTARKWFDIGAEMVDMIGGLPYRDELDYGRGLEAMDILLDKAKSLGIMCHVHVDQFNNPSEKETEQLCDKTIEHGMEGRVVGIHGISIGSHSKEYRYKLYEKMRKAKMMMIACPMAWIDSNRKEDLMPFHNALTPADEMIPEVSLLP.

Residues 1–29 (MKSHVRSFKTYIRDEIIKKGGWVNAHAHA) form the signal peptide.

Belongs to the metallo-dependent hydrolases superfamily.

This is an uncharacterized protein from Haemophilus influenzae (strain ATCC 51907 / DSM 11121 / KW20 / Rd).